Here is a 172-residue protein sequence, read N- to C-terminus: Shikimate kinase (172 aa).

11 to 16 (GAGKST) lines the ATP pocket. S15 serves as a coordination point for Mg(2+). The substrate site is built by D33, R57, and G79. R117 serves as a coordination point for ATP. R136 is a substrate binding site. R153 is a binding site for ATP.

The protein belongs to the shikimate kinase family. Monomer. Mg(2+) is required as a cofactor.

The protein localises to the cytoplasm. It carries out the reaction shikimate + ATP = 3-phosphoshikimate + ADP + H(+). The protein operates within metabolic intermediate biosynthesis; chorismate biosynthesis; chorismate from D-erythrose 4-phosphate and phosphoenolpyruvate: step 5/7. In terms of biological role, catalyzes the specific phosphorylation of the 3-hydroxyl group of shikimic acid using ATP as a cosubstrate. The protein is Shikimate kinase of Pseudomonas aeruginosa (strain LESB58).